The chain runs to 260 residues: Hydroxyethylthiazole kinase (260 aa).

Position 38 (M38) interacts with substrate. Residues K114 and S161 each coordinate ATP. Position 188 (G188) interacts with substrate.

This sequence belongs to the Thz kinase family. Requires Mg(2+) as cofactor.

It catalyses the reaction 5-(2-hydroxyethyl)-4-methylthiazole + ATP = 4-methyl-5-(2-phosphooxyethyl)-thiazole + ADP + H(+). It functions in the pathway cofactor biosynthesis; thiamine diphosphate biosynthesis; 4-methyl-5-(2-phosphoethyl)-thiazole from 5-(2-hydroxyethyl)-4-methylthiazole: step 1/1. Functionally, catalyzes the phosphorylation of the hydroxyl group of 4-methyl-5-beta-hydroxyethylthiazole (THZ). In Campylobacter lari (strain RM2100 / D67 / ATCC BAA-1060), this protein is Hydroxyethylthiazole kinase.